The following is a 193-amino-acid chain: MAVHLTRIYTRTGDDGTTGLSDMSRVAKTDARLVAYADCDEANAAIGAALALGHPDTQITDVLRQIQNDLFDAGADLSTPIVENPKHPPLRIAQSYIDRLEGWCDAYNAGLPALKSFVLPGGSPLSALLHVARTVVRRAERSAWAAVDAHPEGVSVLPAKYLNRLSDLLFILSRVANPDGDVLWRPGGDRTAS.

ATP contacts are provided by residues 10 to 18, K28, 137 to 142, and N163; these read TRTGDDGTT and RRAERS.

This sequence belongs to the Cob(I)alamin adenosyltransferase family.

The protein localises to the cytoplasm. It catalyses the reaction 2 cob(II)yrinate a,c diamide + reduced [electron-transfer flavoprotein] + 2 ATP = 2 adenosylcob(III)yrinate a,c-diamide + 2 triphosphate + oxidized [electron-transfer flavoprotein] + 3 H(+). It carries out the reaction 2 cob(II)alamin + reduced [electron-transfer flavoprotein] + 2 ATP = 2 adenosylcob(III)alamin + 2 triphosphate + oxidized [electron-transfer flavoprotein] + 3 H(+). Its pathway is cofactor biosynthesis; adenosylcobalamin biosynthesis; adenosylcobalamin from cob(II)yrinate a,c-diamide: step 2/7. This Mycobacterium bovis (strain ATCC BAA-935 / AF2122/97) protein is Corrinoid adenosyltransferase.